Reading from the N-terminus, the 57-residue chain is Large ribosomal subunit protein bL32 (57 aa).

The protein belongs to the bacterial ribosomal protein bL32 family.

In Streptomyces avermitilis (strain ATCC 31267 / DSM 46492 / JCM 5070 / NBRC 14893 / NCIMB 12804 / NRRL 8165 / MA-4680), this protein is Large ribosomal subunit protein bL32.